Consider the following 135-residue polypeptide: Flagellar assembly factor FliW 1 (135 aa).

This sequence belongs to the FliW family. In terms of assembly, interacts with translational regulator CsrA and flagellin(s).

It localises to the cytoplasm. In terms of biological role, acts as an anti-CsrA protein, binds CsrA and prevents it from repressing translation of its target genes, one of which is flagellin. Binds to flagellin and participates in the assembly of the flagellum. The polypeptide is Flagellar assembly factor FliW 1 (Helicobacter pylori (strain HPAG1)).